The primary structure comprises 119 residues: Ribonuclease P protein component (119 aa).

It belongs to the RnpA family. Consists of a catalytic RNA component (M1 or rnpB) and a protein subunit.

The catalysed reaction is Endonucleolytic cleavage of RNA, removing 5'-extranucleotides from tRNA precursor.. RNaseP catalyzes the removal of the 5'-leader sequence from pre-tRNA to produce the mature 5'-terminus. It can also cleave other RNA substrates such as 4.5S RNA. The protein component plays an auxiliary but essential role in vivo by binding to the 5'-leader sequence and broadening the substrate specificity of the ribozyme. This is Ribonuclease P protein component from Pasteurella multocida (strain Pm70).